We begin with the raw amino-acid sequence, 99 residues long: UPF0213 protein RBAM_000440 (99 aa).

A GIY-YIG domain is found at 4-79; the sequence is NSHFFYVLLC…KQLTRKKKEQ (76 aa).

The protein belongs to the UPF0213 family.

This chain is UPF0213 protein RBAM_000440, found in Bacillus velezensis (strain DSM 23117 / BGSC 10A6 / LMG 26770 / FZB42) (Bacillus amyloliquefaciens subsp. plantarum).